Consider the following 508-residue polypeptide: Light-independent protochlorophyllide reductase subunit B (508 aa).

Asp36 contacts [4Fe-4S] cluster. The active-site Proton donor is the Asp294. 429 to 430 contributes to the substrate binding site; the sequence is GM.

Belongs to the ChlB/BchB/BchZ family. Protochlorophyllide reductase is composed of three subunits; ChlL, ChlN and ChlB. Forms a heterotetramer of two ChlB and two ChlN subunits. Requires [4Fe-4S] cluster as cofactor.

The catalysed reaction is chlorophyllide a + oxidized 2[4Fe-4S]-[ferredoxin] + 2 ADP + 2 phosphate = protochlorophyllide a + reduced 2[4Fe-4S]-[ferredoxin] + 2 ATP + 2 H2O. It functions in the pathway porphyrin-containing compound metabolism; chlorophyll biosynthesis (light-independent). Component of the dark-operative protochlorophyllide reductase (DPOR) that uses Mg-ATP and reduced ferredoxin to reduce ring D of protochlorophyllide (Pchlide) to form chlorophyllide a (Chlide). This reaction is light-independent. The NB-protein (ChlN-ChlB) is the catalytic component of the complex. This chain is Light-independent protochlorophyllide reductase subunit B, found in Synechocystis sp. (strain ATCC 27184 / PCC 6803 / Kazusa).